Reading from the N-terminus, the 396-residue chain is Elongation factor Tu 2 (396 aa).

In terms of domain architecture, tr-type G spans 10 to 206 (KPHVNVGTIG…ALDTYIPTPE (197 aa)). Residues 19–26 (GHVDHGKT) form a G1 region. 19 to 26 (GHVDHGKT) is a binding site for GTP. A Mg(2+)-binding site is contributed by Thr-26. The G2 stretch occupies residues 60 to 64 (GITIN). Positions 81–84 (DCPG) are G3. GTP-binding positions include 81–85 (DCPGH) and 136–139 (NKAD). The interval 136-139 (NKAD) is G4. Residues 174–176 (SAK) are G5.

It belongs to the TRAFAC class translation factor GTPase superfamily. Classic translation factor GTPase family. EF-Tu/EF-1A subfamily. As to quaternary structure, monomer.

It localises to the cytoplasm. The catalysed reaction is GTP + H2O = GDP + phosphate + H(+). In terms of biological role, GTP hydrolase that promotes the GTP-dependent binding of aminoacyl-tRNA to the A-site of ribosomes during protein biosynthesis. The chain is Elongation factor Tu 2 from Methylobacillus flagellatus (strain ATCC 51484 / DSM 6875 / VKM B-1610 / KT).